The primary structure comprises 84 residues: Small ribosomal subunit protein bS18B (84 aa).

The protein belongs to the bacterial ribosomal protein bS18 family. In terms of assembly, part of the 30S ribosomal subunit. Forms a tight heterodimer with protein bS6.

Its function is as follows. Binds as a heterodimer with protein bS6 to the central domain of the 16S rRNA, where it helps stabilize the platform of the 30S subunit. This is Small ribosomal subunit protein bS18B from Mycolicibacterium smegmatis (strain ATCC 700084 / mc(2)155) (Mycobacterium smegmatis).